The chain runs to 549 residues: Glucose-6-phosphate isomerase (549 aa).

E355 functions as the Proton donor in the catalytic mechanism. Active-site residues include H386 and K514.

The protein belongs to the GPI family.

It localises to the cytoplasm. The enzyme catalyses alpha-D-glucose 6-phosphate = beta-D-fructose 6-phosphate. The protein operates within carbohydrate biosynthesis; gluconeogenesis. It participates in carbohydrate degradation; glycolysis; D-glyceraldehyde 3-phosphate and glycerone phosphate from D-glucose: step 2/4. Functionally, catalyzes the reversible isomerization of glucose-6-phosphate to fructose-6-phosphate. The polypeptide is Glucose-6-phosphate isomerase (Cronobacter sakazakii (strain ATCC BAA-894) (Enterobacter sakazakii)).